The primary structure comprises 214 residues: Transcriptional regulatory protein ComA (214 aa).

The Response regulatory domain maps to 3–121 (KILVIDDHPA…KITQYIYHVL (119 aa)). At Asp55 the chain carries 4-aspartylphosphate. Residues 147–212 (SQKEQDVLTP…EAVLIAKSDG (66 aa)) form the HTH luxR-type domain. Residues 171–190 (NQEIADALHLSKRSIEYSLT) constitute a DNA-binding region (H-T-H motif).

In terms of processing, phosphorylated by ComP.

It is found in the cytoplasm. In terms of biological role, response regulator in the two-component regulatory system ComP/ComA involved in a major quorum response pathway that regulates the development of genetic competence. Regulates directly the expression of over 20 genes, including genes of the srfA operon, degQ, rapA, rapC, rapE, rapF, etc. Regulates indirectly, through the regulation of comK transcription, the expression of late competence genes. This chain is Transcriptional regulatory protein ComA (comA), found in Bacillus subtilis (strain 168).